We begin with the raw amino-acid sequence, 443 residues long: Xaa-Pro dipeptidase (443 aa).

The Mn(2+) site is built by aspartate 246, aspartate 257, histidine 339, glutamate 384, and glutamate 423.

This sequence belongs to the peptidase M24B family. Bacterial-type prolidase subfamily. Requires Mn(2+) as cofactor.

The catalysed reaction is Xaa-L-Pro dipeptide + H2O = an L-alpha-amino acid + L-proline. Functionally, splits dipeptides with a prolyl residue in the C-terminal position. The polypeptide is Xaa-Pro dipeptidase (Salmonella arizonae (strain ATCC BAA-731 / CDC346-86 / RSK2980)).